We begin with the raw amino-acid sequence, 201 residues long: Large ribosomal subunit protein uL4 (201 aa).

Positions 45-71 (AQKTRAEVTGSGKKPWRQKGTGRARAG) are disordered.

The protein belongs to the universal ribosomal protein uL4 family. As to quaternary structure, part of the 50S ribosomal subunit.

Its function is as follows. One of the primary rRNA binding proteins, this protein initially binds near the 5'-end of the 23S rRNA. It is important during the early stages of 50S assembly. It makes multiple contacts with different domains of the 23S rRNA in the assembled 50S subunit and ribosome. In terms of biological role, forms part of the polypeptide exit tunnel. This Shewanella pealeana (strain ATCC 700345 / ANG-SQ1) protein is Large ribosomal subunit protein uL4.